The sequence spans 777 residues: BRCA1-associated RING domain protein 1 (777 aa).

Residues 1–32 (MPDNRQPRNRQPRIRSGNEPRSAPAMEPDGRG) form a disordered region. Residues 26-119 (MEPDGRGAWA…KLRNLLHDNE (94 aa)) form an interaction with BRCA1 region. The RING-type zinc finger occupies 50–87 (CSRCTNILREPVCLGGCEHIFCSNCVSDCIGTGCPVCY). Residues K160 and K170 each participate in a glycyl lysine isopeptide (Lys-Gly) (interchain with G-Cter in SUMO2) cross-link. The interval 167–211 (PAIKKDASAQQDSYEFVSPSPPADVSERAKKASARSGKKQKKKTL) is disordered. A Phosphoserine modification is found at S186. Basic residues predominate over residues 197–209 (KASARSGKKQKKK). A Phosphothreonine modification is found at T299. A disordered region spans residues 356-404 (NIPLPECSSPPSCKRKVGGTSGRKNSNMSDEFISLSPGTPPSTLSSSSY). Low complexity predominate over residues 389 to 404 (SLSPGTPPSTLSSSSY). Position 391 is a phosphoserine (S391). T394 carries the post-translational modification Phosphothreonine. Residue K423 forms a Glycyl lysine isopeptide (Lys-Gly) (interchain with G-Cter in SUMO2) linkage. ANK repeat units lie at residues 427-459 (RGETLLHIASIKGDIPSVEYLLQNGSDPNVKDH), 460-492 (AGWTPLHEACNHGHLKVVELLLQHKALVNTTGY), and 493-525 (QNDSPLHDAAKNGHVDIVKLLLSYGASRNAVNI). Residues 526–546 (FGLRPVDYTDDESMKSLLLLP) form an ANK 4; degenerate repeat. K548 participates in a covalent cross-link: Glycyl lysine isopeptide (Lys-Gly) (interchain with G-Cter in SUMO2). Positions 554–558 (ASHCS) are flexible linker. 2 consecutive BRCT domains span residues 560 to 653 (MNTG…KYEI) and 667 to 777 (LLPK…PLDS).

In terms of assembly, homo- and heterodimer. Heterodimer (RING-type zinc finger) with BRCA1. Heterodimer (via ANK repeats and BRCT domains) with CSTF1/CSTF-50. Component of the BRCA1-A complex, at least composed of the BRCA1, BARD1, UIMC1/RAP80, ABRAXAS1, BRCC3/BRCC36, BABAM2 and BABAM1/NBA1. Interacts with UBXN1. Post-translationally, processed during apoptosis. The homodimer is more susceptible to proteolytic cleavage than the BARD1/BRCA1 heterodimer.

The protein localises to the nucleus. It carries out the reaction S-ubiquitinyl-[E2 ubiquitin-conjugating enzyme]-L-cysteine + [acceptor protein]-L-lysine = [E2 ubiquitin-conjugating enzyme]-L-cysteine + N(6)-ubiquitinyl-[acceptor protein]-L-lysine.. The protein operates within protein modification; protein ubiquitination. Functionally, E3 ubiquitin-protein ligase. The BRCA1-BARD1 heterodimer specifically mediates the formation of 'Lys-6'-linked polyubiquitin chains and coordinates a diverse range of cellular pathways such as DNA damage repair, ubiquitination and transcriptional regulation to maintain genomic stability. Plays a central role in the control of the cell cycle in response to DNA damage. Acts by mediating ubiquitin E3 ligase activity that is required for its tumor suppressor function. Also forms a heterodimer with CSTF1/CSTF-50 to modulate mRNA processing and RNAP II stability by inhibiting pre-mRNA 3' cleavage. This is BRCA1-associated RING domain protein 1 (BARD1) from Homo sapiens (Human).